Here is a 62-residue protein sequence, read N- to C-terminus: MNAITTIKCPQCRKETTLAGNPYRPFCSQRCKMIDLGTWADEGYRIPGEKAPESGDEEPGDE.

Zn(2+)-binding residues include C9, C12, C27, and C31. Basic and acidic residues predominate over residues G43–E53. The tract at residues G43 to E62 is disordered.

The protein belongs to the DNA gyrase inhibitor YacG family. In terms of assembly, interacts with GyrB. It depends on Zn(2+) as a cofactor.

In terms of biological role, inhibits all the catalytic activities of DNA gyrase by preventing its interaction with DNA. Acts by binding directly to the C-terminal domain of GyrB, which probably disrupts DNA binding by the gyrase. This Citrifermentans bemidjiense (strain ATCC BAA-1014 / DSM 16622 / JCM 12645 / Bem) (Geobacter bemidjiensis) protein is DNA gyrase inhibitor YacG.